We begin with the raw amino-acid sequence, 140 residues long: MPSLRDLSLERDQELNQLRARINQLGKTGKEEANDFVGLNISNEPVYDTVIQTGQSSNATNSFVQETIQKTKQKESGQPYIIPQKNEHQRYIDKVCETSDLKAKLAPIMEVLEKKTNEKIKGIIRKRVLQEPDRDNDDSG.

A Phosphoserine modification is found at Ser-139.

As to quaternary structure, belongs to the NTC complex (or PRP19-associated complex), composed of at least CEF1, CLF1, ISY1, NTC20, SNT309, SYF1, SYF2, and PRP19. The NTC complex associates with the spliceosome after the release of the U1 and U4 snRNAs and forms the CWC spliceosome subcomplex (or CEF1-associated complex) reminiscent of a late-stage spliceosome composed also of the U2, U5 and U6 snRNAs and at least BUD13, BRR2, CDC40, CUS1, CWC2, CWC15, CWC21, CWC22, CWC23, CWC24, CWC25, CWC27, ECM2, HSH155, IST3, LEA1, MSL1, PRP8, PRP9, PRP11, PRP21, PRP22, PRP45, PRP46, SLU7, SMB1, SMD1, SMD2, SMD3, SMX2, SMX3, SNU114, SPP2, RSE1 and YJU2. Interacts with CEF1, CLF1, ISY1, PRP46, and SYF1.

It is found in the nucleus. Its function is as follows. Involved in pre-mRNA splicing. As a component of the NTC complex, associates to the spliceosome to mediate conformational rearrangement or to stabilize the structure of the spliceosome after U4 snRNA dissociation, which leads to spliceosome maturation. The chain is Pre-mRNA-splicing factor NTC20 (NTC20) from Saccharomyces cerevisiae (strain ATCC 204508 / S288c) (Baker's yeast).